Consider the following 59-residue polypeptide: Large ribosomal subunit protein bL32 (59 aa).

A disordered region spans residues 1–59; that stretch reads MAVQQNRKSRSRRGMRRSHDALSSAALSIDPTTGEKHRRHHVTPDGFYRGKKVVEVSQD. A compositionally biased stretch (basic residues) spans 7–16; that stretch reads RKSRSRRGMR.

It belongs to the bacterial ribosomal protein bL32 family.

In Hahella chejuensis (strain KCTC 2396), this protein is Large ribosomal subunit protein bL32.